Consider the following 371-residue polypeptide: Cytochrome b (371 aa).

The next 4 membrane-spanning stretches (helical) occupy residues 25-45, 69-90, 105-125, and 170-190; these read FGSM…FLAV, WMMQ…YIHI, WMSG…GYVL, and FFAL…LHII. His75 and His89 together coordinate heme b. Positions 174 and 188 each coordinate heme b. His193 lines the a ubiquinone pocket. 4 helical membrane passes run 218-238, 280-300, 312-332, and 339-358; these read HKDL…MSFF, LGGA…PFTH, LSQL…WAAT, and FIII…LSFP.

The protein belongs to the cytochrome b family. As to quaternary structure, the cytochrome bc1 complex contains 3 respiratory subunits (MT-CYB, CYC1 and UQCRFS1), 2 core proteins (UQCRC1 and UQCRC2) and probably 6 low-molecular weight proteins. Heme b serves as cofactor.

The protein resides in the mitochondrion inner membrane. In terms of biological role, component of the ubiquinol-cytochrome c reductase complex (complex III or cytochrome b-c1 complex) that is part of the mitochondrial respiratory chain. The b-c1 complex mediates electron transfer from ubiquinol to cytochrome c. Contributes to the generation of a proton gradient across the mitochondrial membrane that is then used for ATP synthesis. This Apodora papuana (Papuan olive python) protein is Cytochrome b (MT-CYB).